The following is a 118-amino-acid chain: MSGGSSCSQTPSRAIPATRRVVLGDGVQLPPGDYSTTPGGTLFSTTPGGTRIIYDRKFLMECRNSPVTKTPPRDLPTIPGVTSPSSDEPPMEASQSHLRNSPEDKRAGGEESQFEMDI.

Polar residues-rich tracts occupy residues 1 to 12 and 34 to 48; these read MSGGSSCSQTPS and YSTT…TTPG. Disordered stretches follow at residues 1–20 and 25–48; these read MSGG…ATRR and DGVQ…TTPG. Serine 2 carries the post-translational modification N-acetylserine. Threonine 37 carries the phosphothreonine; by MTOR modification. Residue threonine 41 is modified to Phosphothreonine. Serine 44 carries the post-translational modification Phosphoserine. A Phosphothreonine; by MTOR modification is found at threonine 46. Phosphothreonine is present on threonine 50. Phosphotyrosine is present on tyrosine 54. The YXXXXLphi motif signature appears at 54–60; sequence YDRKFLM. Residue lysine 57 forms a Glycyl lysine isopeptide (Lys-Gly) (interchain with G-Cter in ubiquitin) linkage. The tract at residues 64-118 is disordered; that stretch reads NSPVTKTPPRDLPTIPGVTSPSSDEPPMEASQSHLRNSPEDKRAGGEESQFEMDI. Position 65 is a phosphoserine; by DYRK2, MAPK1, MAPK3 and MTOR (serine 65). At threonine 70 the chain carries Phosphothreonine; by MTOR. Position 77 is a phosphothreonine (threonine 77). Residues serine 83 and serine 96 each carry the phosphoserine modification. Over residues 100–109 the composition is skewed to basic and acidic residues; sequence NSPEDKRAGG. Serine 101 is subject to Phosphoserine; by DYRK2. Residue serine 112 is modified to Phosphoserine. Residues 114–118 carry the TOS motif motif; that stretch reads FEMDI.

The protein belongs to the eIF4E-binding protein family. Hypophosphorylated EIF4EBP1 competes with EIF4G1/EIF4G3 to interact with EIF4E; insulin stimulated MAP-kinase (MAPK1 and MAPK3) or mTORC1 phosphorylation of EIF4EBP1 causes dissociation of the complex allowing EIF4G1/EIF4G3 to bind and consequent initiation of translation. Interacts (via TOS motif) with RPTOR; promoting phosphorylation by mTORC1. In terms of processing, phosphorylated on serine and threonine residues in response to insulin, EGF and PDGF. Phosphorylation at Thr-37, Thr-46, Ser-65 and Thr-70, corresponding to the hyperphosphorylated form, is regulated by mTORC1 and abolishes binding to EIF4E. Post-translationally, ubiquitinated: when eIF4E levels are low, hypophosphorylated form is ubiquitinated by the BCR(KLHL25) complex, leading to its degradation and serving as a homeostatic mechanism to maintain translation and prevent eIF4E inhibition when eIF4E levels are low. Not ubiquitinated when hyperphosphorylated (at Thr-37, Thr-46, Ser-65 and Thr-70) or associated with eIF4E.

The protein resides in the cytoplasm. Its subcellular location is the nucleus. Functionally, repressor of translation initiation that regulates EIF4E activity by preventing its assembly into the eIF4F complex: hypophosphorylated form competes with EIF4G1/EIF4G3 and strongly binds to EIF4E, leading to repress translation. In contrast, hyperphosphorylated form dissociates from EIF4E, allowing interaction between EIF4G1/EIF4G3 and EIF4E, leading to initiation of translation. Mediates the regulation of protein translation by hormones, growth factors and other stimuli that signal through the MAP kinase and mTORC1 pathways. This chain is Eukaryotic translation initiation factor 4E-binding protein 1 (EIF4EBP1), found in Homo sapiens (Human).